The primary structure comprises 62 residues: UPF0434 protein Arad_4458 (62 aa).

The protein belongs to the UPF0434 family.

This chain is UPF0434 protein Arad_4458, found in Rhizobium rhizogenes (strain K84 / ATCC BAA-868) (Agrobacterium radiobacter).